The following is a 469-amino-acid chain: Glutamate--tRNA ligase (469 aa).

The 'HIGH' region motif lies at 11 to 21 (PSPTGFIHLGN). Residues 118–131 (GEKPRYDGTWRPEP) are compositionally biased toward basic and acidic residues. The interval 118-138 (GEKPRYDGTWRPEPGKVLPEP) is disordered. Residues 243–247 (KMSKR) carry the 'KMSKS' region motif. An ATP-binding site is contributed by K246.

The protein belongs to the class-I aminoacyl-tRNA synthetase family. Glutamate--tRNA ligase type 1 subfamily. As to quaternary structure, monomer.

The protein resides in the cytoplasm. The enzyme catalyses tRNA(Glu) + L-glutamate + ATP = L-glutamyl-tRNA(Glu) + AMP + diphosphate. Its function is as follows. Catalyzes the attachment of glutamate to tRNA(Glu) in a two-step reaction: glutamate is first activated by ATP to form Glu-AMP and then transferred to the acceptor end of tRNA(Glu). This chain is Glutamate--tRNA ligase, found in Burkholderia thailandensis (strain ATCC 700388 / DSM 13276 / CCUG 48851 / CIP 106301 / E264).